We begin with the raw amino-acid sequence, 113 residues long: PTS system fructose-like EIIB component 3 (113 aa).

The PTS EIIB type-2 domain occupies 1-100; sequence MAYLVAVTAC…PQRVMSAVRK (100 aa). The active-site Phosphocysteine intermediate is cysteine 10. Cysteine 10 carries the post-translational modification Phosphocysteine; by EIIA.

It is found in the cytoplasm. It catalyses the reaction D-fructose(out) + N(pros)-phospho-L-histidyl-[protein] = D-fructose 1-phosphate(in) + L-histidyl-[protein]. The phosphoenolpyruvate-dependent sugar phosphotransferase system (sugar PTS), a major carbohydrate active transport system, catalyzes the phosphorylation of incoming sugar substrates concomitantly with their translocation across the cell membrane. This chain is PTS system fructose-like EIIB component 3 (frwD), found in Escherichia coli (strain K12).